We begin with the raw amino-acid sequence, 105 residues long: Protein SMALL AUXIN UP-REGULATED RNA 16 (105 aa).

The protein belongs to the ARG7 family. In terms of tissue distribution, expressed in etiolated hypocotyls, cotyledons, leaves, flowers and siliques.

The protein resides in the cell membrane. Its function is as follows. Provide a mechanistic link between auxin and plasma membrane H(+)-ATPases (PM H(+)-ATPases, e.g. AHA1 and AHA2), and triggers PM H(+)-ATPases activity by promoting phosphorylation of their C-terminal autoinhibitory domain as a result of PP2C-D subfamily of type 2C phosphatases inhibition, thus leading to the acidification of the apoplast and the facilitation of solutes and water uptake to drive cell expansion. Triggers plant growth probably by promoting cell elongation. Regulates branch angles and bending. This is Protein SMALL AUXIN UP-REGULATED RNA 16 from Arabidopsis thaliana (Mouse-ear cress).